Consider the following 105-residue polypeptide: UPF0235 protein RPR_04990 (105 aa).

Belongs to the UPF0235 family.

This is UPF0235 protein RPR_04990 from Rickettsia peacockii (strain Rustic).